The sequence spans 1023 residues: GATOR2 complex protein WDR24 (1023 aa).

WD repeat units follow at residues 16 to 54 (NLGS…FKVT), 64 to 108 (SLNY…SKSV), 114 to 154 (DHSR…NASK), 159 to 199 (PKSE…IAVE), 203 to 243 (SHQG…SLNN), 245 to 287 (STIS…IPLF), and 291 to 329 (DHRD…KPYQ). Positions 563 to 578 (SKNIIDNSNDSNQEIN) are enriched in low complexity. Disordered stretches follow at residues 563–621 (SKNI…EPPS) and 661–824 (QKST…SIEN). A compositionally biased stretch (acidic residues) spans 584–593 (KEDEEEDDDN). The span at 661 to 681 (QKSTDNISDNNSNVHVNIKRQ) shows a compositional bias: polar residues. A compositionally biased stretch (low complexity) spans 682–695 (NQPTNNNNNNSNID). Residues 696 to 742 (NLEKKSNKSKSTKENKESSLTDQNKQKRNDNKEKIDNNEIDNDNKDN) are compositionally biased toward basic and acidic residues. Residues 743 to 759 (NDDDDNDVDNIGEDNDE) show a composition bias toward acidic residues. Low complexity predominate over residues 760 to 812 (INNNNDNNNNNNNNNNNNNNNNNNNNNNNNNNNNNNNNKNNNNDNNNNNNINN). The segment at 947–969 (ACSSCGKSIPQNSIICEKCNKAS) adopts a C4-type zinc-finger fold. C948, C951, C962, C965, C972, C975, C986, C989, H991, H994, H997, C1010, C1014, H1016, and C1018 together coordinate Zn(2+). An RING-type; atypical zinc finger spans residues 970-1021 (SKCSICRLPVKGMWVWCQGCGHGGHLEHMKSWFIDKNQKSCPTGCTHICTPF).

Belongs to the WD repeat WDR24 family. In terms of assembly, probably part of the GATOR complex.

It localises to the lysosome membrane. It carries out the reaction S-ubiquitinyl-[E2 ubiquitin-conjugating enzyme]-L-cysteine + [acceptor protein]-L-lysine = [E2 ubiquitin-conjugating enzyme]-L-cysteine + N(6)-ubiquitinyl-[acceptor protein]-L-lysine.. It functions in the pathway protein modification; protein ubiquitination. Functionally, as a component of the GATOR complex may function in the amino acid-sensing branch of the TORC1 signaling pathway. The sequence is that of GATOR2 complex protein WDR24 from Dictyostelium discoideum (Social amoeba).